Reading from the N-terminus, the 527-residue chain is GMP synthase [glutamine-hydrolyzing] (527 aa).

The Glutamine amidotransferase type-1 domain maps to 4–202 (KILILDFGSQ…VLQICGARAD (199 aa)). C81 acts as the Nucleophile in catalysis. Catalysis depends on residues H176 and E178. Residues 203-395 (WEMGNYIDEA…LGLPPAMVYR (193 aa)) form the GMPS ATP-PPase domain. An ATP-binding site is contributed by 230–236 (SGGVDSS).

In terms of assembly, homodimer.

It catalyses the reaction XMP + L-glutamine + ATP + H2O = GMP + L-glutamate + AMP + diphosphate + 2 H(+). It functions in the pathway purine metabolism; GMP biosynthesis; GMP from XMP (L-Gln route): step 1/1. Catalyzes the synthesis of GMP from XMP. The chain is GMP synthase [glutamine-hydrolyzing] from Paraburkholderia phytofirmans (strain DSM 17436 / LMG 22146 / PsJN) (Burkholderia phytofirmans).